The sequence spans 238 residues: MAFTFKQFHIDDLNCGMAVSTDAVVLGAWAPLTNAKQILDIGAGSGILGLMAAQRSQANITCIELDDTAAIACQHNIAQSPWASRIRLVQGSIQQLSQAEEYQGYFDHIICNPPYFEHGPQAQLSQRAMARHTDQLSFNELLAAIEQCLSPNGLASLILPIQSLHNFNHLLSQSRLEWVERVDIKSVEGKRANRVLCLLTAQTHRTVEPKVSELTLRDTSGQYSQAMVHLTQDFYLKL.

Belongs to the methyltransferase superfamily. tRNA (adenine-N(6)-)-methyltransferase family.

Its subcellular location is the cytoplasm. The catalysed reaction is adenosine(37) in tRNA1(Val) + S-adenosyl-L-methionine = N(6)-methyladenosine(37) in tRNA1(Val) + S-adenosyl-L-homocysteine + H(+). Its function is as follows. Specifically methylates the adenine in position 37 of tRNA(1)(Val) (anticodon cmo5UAC). The chain is tRNA1(Val) (adenine(37)-N6)-methyltransferase from Shewanella sp. (strain W3-18-1).